Here is a 170-residue protein sequence, read N- to C-terminus: SKP1-like protein 16 (170 aa).

The interval 109-167 (ILAVNYLNVQDLLGLTCQTVADHMKDMSPEEVRELFNIENDYTPEEEDAIRKENAWAFE) is interaction with the F-box domain of F-box proteins.

This sequence belongs to the SKP1 family. Part of a SCF (SKP1-cullin-F-box) protein ligase complex. Interacts with CPR1/CPR30, At3g61590 and At4g11590. Mainly detected in the siliques.

It localises to the nucleus. It functions in the pathway protein modification; protein ubiquitination. Functionally, involved in ubiquitination and subsequent proteasomal degradation of target proteins. Together with CUL1, RBX1 and a F-box protein, it forms a SCF E3 ubiquitin ligase complex. The functional specificity of this complex depends on the type of F-box protein. In the SCF complex, it serves as an adapter that links the F-box protein to CUL1. In Arabidopsis thaliana (Mouse-ear cress), this protein is SKP1-like protein 16 (ASK16).